An 83-amino-acid chain; its full sequence is Cell division topological specificity factor (83 aa).

This sequence belongs to the MinE family.

Functionally, prevents the cell division inhibition by proteins MinC and MinD at internal division sites while permitting inhibition at polar sites. This ensures cell division at the proper site by restricting the formation of a division septum at the midpoint of the long axis of the cell. The chain is Cell division topological specificity factor from Alcanivorax borkumensis (strain ATCC 700651 / DSM 11573 / NCIMB 13689 / SK2).